A 284-amino-acid polypeptide reads, in one-letter code: Pantothenate synthetase (284 aa).

30-37 (MGNLHDGH) serves as a coordination point for ATP. H37 (proton donor) is an active-site residue. Residue Q61 participates in (R)-pantoate binding. Residue Q61 participates in beta-alanine binding. 149-152 (GEKD) serves as a coordination point for ATP. Q155 contacts (R)-pantoate. Residues V178 and 186 to 189 (LSSR) each bind ATP.

Belongs to the pantothenate synthetase family. Homodimer.

The protein resides in the cytoplasm. It carries out the reaction (R)-pantoate + beta-alanine + ATP = (R)-pantothenate + AMP + diphosphate + H(+). The protein operates within cofactor biosynthesis; (R)-pantothenate biosynthesis; (R)-pantothenate from (R)-pantoate and beta-alanine: step 1/1. Its function is as follows. Catalyzes the condensation of pantoate with beta-alanine in an ATP-dependent reaction via a pantoyl-adenylate intermediate. The chain is Pantothenate synthetase from Cronobacter sakazakii (strain ATCC BAA-894) (Enterobacter sakazakii).